Here is an 804-residue protein sequence, read N- to C-terminus: MNHDSKITPIMQQYMMLKSQYKEYLLFYRLGDFYELFFDDAIETSRILNIVLTKKGNVPMCGVPFHSSESYLNRLVKLGYKIAICEQLETSEEAKKRGYKALVKRDVVRIVTPGTILEDSLLEAKENNYLSCIVNVDHNYAIAWLELSTGLFYYHTTELHKLDSDLFRINPKEVLISDKLVELDSIYSILRKYKFSVTQYSGSFFDVSRSYNTLCNVYGISTLKGLGDLKNEEIAVCGSLLEYVKATQKGNLPQLEFPKAYSKGDFMFIDAAALRNLELFCTQSGDLEGSLISSIDYTITACGGRLLKRCLSAPLACSHAINRRLDIVEFFVNDRTLCRGVRETLRGIADIERILTRIKVGKCSPKDLYALKLTLDKIFVLLDLLHKFDSSVVGDFCSRLGKYDDLCKTLDDVLIPNNVNNVKDGGFINPDYDAQLSEYIYIQSYSNDLIQELRDKYRNITNIQSLKILYNNILGYYVEVSSSYLISDKDFIHRQTLANSIRYTTSELKALESKIISARDAAINLEVKIFGQLCTCIIEVADKITMTAHAIAEIDMLTSFAELAIQYSYTKPIVDDSYEFNIKKGRHPVVERNGKFVANDIDLSLMQRVHLITGPNMAGKSTFLRQNALIGILAHIGSFVPAQHAHIGVIDKVFSRVGASDNIASGHSTFMVEMTETAAIINQATDKSFVILDEIGRGTGTYDGLSIAWSVIEQIHNVNKSRAIFATHYHELSKLDRYLENIKCFCMKVEEWNGKVVFLHEIIPGSTNKSYGIHVAKLAGFPQSVLDRAEDLMSKLKANEDLLT.

Residue glycine 614–serine 621 coordinates ATP.

This sequence belongs to the DNA mismatch repair MutS family.

Functionally, this protein is involved in the repair of mismatches in DNA. It is possible that it carries out the mismatch recognition step. This protein has a weak ATPase activity. In Ehrlichia chaffeensis (strain ATCC CRL-10679 / Arkansas), this protein is DNA mismatch repair protein MutS.